Reading from the N-terminus, the 279-residue chain is Probable endonuclease 4 (279 aa).

9 residues coordinate Zn(2+): H69, H109, E145, D179, H182, H216, D229, H231, and E261.

It belongs to the AP endonuclease 2 family. Requires Zn(2+) as cofactor.

The enzyme catalyses Endonucleolytic cleavage to 5'-phosphooligonucleotide end-products.. Functionally, endonuclease IV plays a role in DNA repair. It cleaves phosphodiester bonds at apurinic or apyrimidinic (AP) sites, generating a 3'-hydroxyl group and a 5'-terminal sugar phosphate. The protein is Probable endonuclease 4 of Buchnera aphidicola subsp. Schizaphis graminum (strain Sg).